Here is a 194-residue protein sequence, read N- to C-terminus: 5-formyltetrahydrofolate cyclo-ligase (194 aa).

ATP is bound by residues 6–10 (KSQLR), 139–146 (GRGAGFYD), and aspartate 177.

It belongs to the 5-formyltetrahydrofolate cyclo-ligase family.

It catalyses the reaction (6S)-5-formyl-5,6,7,8-tetrahydrofolate + ATP = (6R)-5,10-methenyltetrahydrofolate + ADP + phosphate. It functions in the pathway one-carbon metabolism; tetrahydrofolate interconversion. In terms of biological role, involved in the removal of 5-formyltetrahydrofolate. In vitro, it is a potent inhibitor of various folate-dependent enzymes in the C1 metabolism network and in vivo it might function as a folate storage. 5-formyltetrahydrofolate is also used as an antifolate rescue agent in cancer chemotherapy. Catalyzes the irreversible ATP-dependent transformation of 5-formyltetrahydrofolate (5-CHO-THF) to form 5,10-methenyltetrahydrofolate (5,10-CH=THF). The reverse reaction is catalyzed by the serine hydroxymethyltransferase GlyA (SHMT). This Mycolicibacterium smegmatis (strain ATCC 700084 / mc(2)155) (Mycobacterium smegmatis) protein is 5-formyltetrahydrofolate cyclo-ligase.